Here is a 98-residue protein sequence, read N- to C-terminus: MSMVYANIFLAFIMSLMGLLMYRSHLMSSLLCLEGMMLSLFVMMTATILNNHFTLASMAPIILLVFAACEAALGLSLLVTVSNTYGTDYVQNLNLLQC.

3 helical membrane-spanning segments follow: residues 1-21 (MSMV…GLLM), 29-49 (SLLC…ATIL), and 61-81 (IILL…LVTV).

Belongs to the complex I subunit 4L family. Core subunit of respiratory chain NADH dehydrogenase (Complex I) which is composed of 45 different subunits.

Its subcellular location is the mitochondrion inner membrane. It carries out the reaction a ubiquinone + NADH + 5 H(+)(in) = a ubiquinol + NAD(+) + 4 H(+)(out). In terms of biological role, core subunit of the mitochondrial membrane respiratory chain NADH dehydrogenase (Complex I) which catalyzes electron transfer from NADH through the respiratory chain, using ubiquinone as an electron acceptor. Part of the enzyme membrane arm which is embedded in the lipid bilayer and involved in proton translocation. This is NADH-ubiquinone oxidoreductase chain 4L (MT-ND4L) from Pusa caspica (Caspian seal).